The following is a 278-amino-acid chain: Ribosomal RNA small subunit methyltransferase J (278 aa).

S-adenosyl-L-methionine is bound by residues 143-144 (ER) and Asp-197.

Belongs to the methyltransferase superfamily. RsmJ family.

The protein localises to the cytoplasm. It catalyses the reaction guanosine(1516) in 16S rRNA + S-adenosyl-L-methionine = N(2)-methylguanosine(1516) in 16S rRNA + S-adenosyl-L-homocysteine + H(+). Its function is as follows. Specifically methylates the guanosine in position 1516 of 16S rRNA. The sequence is that of Ribosomal RNA small subunit methyltransferase J from Marinobacter nauticus (strain ATCC 700491 / DSM 11845 / VT8) (Marinobacter aquaeolei).